A 103-amino-acid polypeptide reads, in one-letter code: Large ribosomal subunit protein uL24 (103 aa).

It belongs to the universal ribosomal protein uL24 family. Part of the 50S ribosomal subunit.

Functionally, one of two assembly initiator proteins, it binds directly to the 5'-end of the 23S rRNA, where it nucleates assembly of the 50S subunit. In terms of biological role, one of the proteins that surrounds the polypeptide exit tunnel on the outside of the subunit. The protein is Large ribosomal subunit protein uL24 of Dehalococcoides mccartyi (strain ATCC BAA-2266 / KCTC 15142 / 195) (Dehalococcoides ethenogenes (strain 195)).